We begin with the raw amino-acid sequence, 195 residues long: Probable GTP-binding protein EngB (195 aa).

Residues 22–195 enclose the EngB-type G domain; sequence QLPEIALAGR…WSALSRYIKR (174 aa). Residues 30–37, 57–61, 75–78, 142–145, and 174–176 contribute to the GTP site; these read GRSNVGKS, GKTQT, DVPG, TKLD, and FSA. Mg(2+)-binding residues include serine 37 and threonine 59.

It belongs to the TRAFAC class TrmE-Era-EngA-EngB-Septin-like GTPase superfamily. EngB GTPase family. It depends on Mg(2+) as a cofactor.

Functionally, necessary for normal cell division and for the maintenance of normal septation. The sequence is that of Probable GTP-binding protein EngB from Oceanobacillus iheyensis (strain DSM 14371 / CIP 107618 / JCM 11309 / KCTC 3954 / HTE831).